The chain runs to 185 residues: Large ribosomal subunit protein uL5 (185 aa).

The protein belongs to the universal ribosomal protein uL5 family. Part of the 50S ribosomal subunit; part of the 5S rRNA/L5/L18/L25 subcomplex. Contacts the 5S rRNA and the P site tRNA. Forms a bridge to the 30S subunit in the 70S ribosome.

Functionally, this is one of the proteins that bind and probably mediate the attachment of the 5S RNA into the large ribosomal subunit, where it forms part of the central protuberance. In the 70S ribosome it contacts protein S13 of the 30S subunit (bridge B1b), connecting the 2 subunits; this bridge is implicated in subunit movement. Contacts the P site tRNA; the 5S rRNA and some of its associated proteins might help stabilize positioning of ribosome-bound tRNAs. This Sinorhizobium medicae (strain WSM419) (Ensifer medicae) protein is Large ribosomal subunit protein uL5.